The sequence spans 196 residues: Imidazoleglycerol-phosphate dehydratase (196 aa).

This sequence belongs to the imidazoleglycerol-phosphate dehydratase family.

The protein resides in the cytoplasm. It catalyses the reaction D-erythro-1-(imidazol-4-yl)glycerol 3-phosphate = 3-(imidazol-4-yl)-2-oxopropyl phosphate + H2O. It functions in the pathway amino-acid biosynthesis; L-histidine biosynthesis; L-histidine from 5-phospho-alpha-D-ribose 1-diphosphate: step 6/9. The protein is Imidazoleglycerol-phosphate dehydratase of Clostridium botulinum (strain Kyoto / Type A2).